We begin with the raw amino-acid sequence, 480 residues long: Aromatic-L-amino-acid decarboxylase (480 aa).

At Met-1 the chain carries N-acetylmethionine. Tandem repeats lie at residues 58 to 115 (RDIE…TELE) and 118 to 178 (MMDW…TQAA). A 2 X approximate tandem repeats region spans residues 58 to 178 (RDIEKIIMPG…AASPELTQAA (121 aa)). A substrate-binding site is contributed by Thr-82. Positions 148 and 149 each coordinate pyridoxal 5'-phosphate. His-192 provides a ligand contact to substrate. Thr-246 and Asn-300 together coordinate pyridoxal 5'-phosphate. Position 303 is an N6-(pyridoxal phosphate)lysine (Lys-303).

This sequence belongs to the group II decarboxylase family. Homodimer. Requires pyridoxal 5'-phosphate as cofactor.

The enzyme catalyses L-dopa + H(+) = dopamine + CO2. It catalyses the reaction 5-hydroxy-L-tryptophan + H(+) = serotonin + CO2. Its pathway is catecholamine biosynthesis; dopamine biosynthesis; dopamine from L-tyrosine: step 2/2. Functionally, catalyzes the decarboxylation of L-3,4-dihydroxyphenylalanine (DOPA) to dopamine and L-5-hydroxytryptophan to serotonin. The sequence is that of Aromatic-L-amino-acid decarboxylase from Rattus norvegicus (Rat).